We begin with the raw amino-acid sequence, 829 residues long: Potassium voltage-gated channel unc-103 (829 aa).

Positions 1–76 (MKTAVFGRDS…PRASHSSRRT (76 aa)) are disordered. Residues 1 to 123 (MKTAVFGRDS…YSPFKAVWDW (123 aa)) are Cytoplasmic-facing. Over residues 46-66 (GVSGTGGGGSGGLQGAPGAGG) the composition is skewed to gly residues. Residues 124–144 (IILLLVIYTAVFTPYVAAFLL) form a helical membrane-spanning segment. Residues 145–158 (RELQDTAKKSRFTE) lie on the Extracellular side of the membrane. A helical membrane pass occupies residues 159–179 (PLEIVDLIVDIMFIVDIIINF). Residues 180-203 (RTTYVNENDEACQVVSDPGKIATH) are Cytoplasmic-facing. Residues 204-224 (YFKGWFIIDMVAAVPFDLLLV) traverse the membrane as a helical segment. Over 225–234 (STNSDETTTL) the chain is Extracellular. Residues 235 to 255 (IGLLKTARLLRLVRVARKLDR) traverse the membrane as a helical; Voltage-sensor segment. Residues 256–261 (YSEYGA) lie on the Cytoplasmic side of the membrane. Residues 262–282 (AVLLLLMATFALIAHWLACIW) form a helical membrane-spanning segment. Topologically, residues 283–327 (YAIGSAELSHKEYTWLHQLSKQLAQPYTSTNGTIPTGGPTLKSRY) are extracellular. N-linked (GlcNAc...) asparagine glycosylation occurs at asparagine 313. Residues 328–348 (VTSLYFTLSTITSIGFGNVSA) constitute an intramembrane region (pore-forming). At 349–354 (TTDSEK) the chain is on the extracellular side. The chain crosses the membrane as a helical span at residues 355–375 (IFTIIMMILGSLMYASVFGNV). The Cytoplasmic segment spans residues 376–829 (SAIIQRLYSG…TPTQETDTIL (454 aa)). 458 to 559 (AFAGSTPGCL…ILRDDLLDVL (102 aa)) is a binding site for a nucleoside 3',5'-cyclic phosphate. The tract at residues 601 to 674 (SMNKDRYTTP…PLLRRSTNHH (74 aa)) is disordered. Positions 603–615 (NKDRYTTPPDGDH) are enriched in basic and acidic residues. Residues 640–650 (SAGSRSSSRCS) show a composition bias toward low complexity.

The protein belongs to the potassium channel family. H (Eag) (TC 1.A.1.20) subfamily. Kv11.1/KCNH2 sub-subfamily. In terms of assembly, the potassium channel is composed of a homo- or heterotetrameric complex. Interacts with dnj-1; dnj-1 chaperone promotes tetramerization.

Its subcellular location is the cell membrane. Functionally, pore-forming (alpha) subunit of voltage-gated inwardly rectifying potassium channel. Channel properties are modulated by cAMP and subunit assembly. Regulates the movements of the male's copulatory spicules before and during male mating behavior. The chain is Potassium voltage-gated channel unc-103 from Caenorhabditis elegans.